Here is a 28-residue protein sequence, read N- to C-terminus: Kappa-stichotoxin-Shd1a/kappa-stichotoxin-Shd1b (28 aa).

4-hydroxyproline; in form SHTX-1 (Shd1a) is present on Pro-6. Intrachain disulfides connect Cys-7–Cys-19 and Cys-10–Cys-25.

It belongs to the sea anemone BBH family. Post-translationally, occurs in 2 forms which differ in the post-translational modification of Pro-6. In form SHTX-1 (Shd1a) Pro-6 is a hydroxyproline while in form SHTX-2 (Shd1b) Pro-6 is unmodified.

It is found in the secreted. It localises to the nematocyst. In terms of biological role, kappa-stichotoxin-Shd1a: inhibits voltage-gated potassium channels (Kv). Its function is as follows. Kappa-stichotoxin-Shd1b: inhibits voltage-gated potassium channels (Kv). This toxin inhibits the binding of 125I-alpha-dendrotoxin to synaptosomal membranes (IC(50)=270 nM). The polypeptide is Kappa-stichotoxin-Shd1a/kappa-stichotoxin-Shd1b (Stichodactyla haddoni (Saddle carpet anemone)).